The following is a 70-amino-acid chain: ATP synthase subunit c (70 aa).

2 helical membrane passes run Ile4–Ile24 and Phe47–Val67.

It belongs to the ATPase C chain family. F-type ATPases have 2 components, F(1) - the catalytic core - and F(0) - the membrane proton channel. F(1) has five subunits: alpha(3), beta(3), gamma(1), delta(1), epsilon(1). F(0) has three main subunits: a(1), b(2) and c(10-14). The alpha and beta chains form an alternating ring which encloses part of the gamma chain. F(1) is attached to F(0) by a central stalk formed by the gamma and epsilon chains, while a peripheral stalk is formed by the delta and b chains.

It localises to the cell membrane. Its function is as follows. F(1)F(0) ATP synthase produces ATP from ADP in the presence of a proton or sodium gradient. F-type ATPases consist of two structural domains, F(1) containing the extramembraneous catalytic core and F(0) containing the membrane proton channel, linked together by a central stalk and a peripheral stalk. During catalysis, ATP synthesis in the catalytic domain of F(1) is coupled via a rotary mechanism of the central stalk subunits to proton translocation. Key component of the F(0) channel; it plays a direct role in translocation across the membrane. A homomeric c-ring of between 10-14 subunits forms the central stalk rotor element with the F(1) delta and epsilon subunits. This is ATP synthase subunit c from Staphylococcus carnosus (strain TM300).